Consider the following 577-residue polypeptide: Sensor histidine kinase YesM (577 aa).

Topologically, residues 1–17 (MKKRVAGWYRRMKIKDK) are cytoplasmic. The helical transmembrane segment at 18 to 38 (LFVFLSLIMAVSFLFVYSGVQ) threads the bilayer. Residues 39–286 (YAFHVYDEQI…PFDQMFAKIS (248 aa)) lie on the Extracellular side of the membrane. A helical transmembrane segment spans residues 287-307 (FMKTVIGTCFLLFFCVVLLFG). At 308-577 (RKIANSITEP…ITIPCRNEVV (270 aa)) the chain is on the cytoplasmic side. The 57-residue stretch at 312-368 (NSITEPIEQLVTAMKSVQHSGIEAGVSLSLPEHTQDEAGMLNRHFTVMMKRINELME) folds into the HAMP domain. The 210-residue stretch at 365 to 574 (ELMEENVEKQ…RIVITIPCRN (210 aa)) folds into the Histidine kinase domain. His-392 carries the phosphohistidine; by autocatalysis modification.

It localises to the cell membrane. The enzyme catalyses ATP + protein L-histidine = ADP + protein N-phospho-L-histidine.. Its function is as follows. Member of the two-component regulatory system YesM/YesN. Probably activates YesN by phosphorylation. The protein is Sensor histidine kinase YesM (yesM) of Bacillus subtilis (strain 168).